Reading from the N-terminus, the 457-residue chain is Metal tolerance protein C4 (457 aa).

Topologically, residues 1–115 are cytoplasmic; sequence MQSSHRILSR…IEINDQHSQR (115 aa). Residues 116-136 form a helical membrane-spanning segment; that stretch reads AVTTALWCNFLVFSLKFGVWW. At 137–141 the chain is on the vacuolar side; sequence TSSSH. A helical membrane pass occupies residues 142-162; it reads VIMAEVVHSVADFANQALLAY. Over 163-183 the chain is Cytoplasmic; the sequence is GLSSSRRAPDALHPYGYSKER. The helical transmembrane segment at 184–204 threads the bilayer; sequence FVWSLISAVGIFCLGSGATIV. Topologically, residues 205 to 220 are vacuolar; it reads NGVQNLWTSSPPPNME. A helical transmembrane segment spans residues 221–241; the sequence is LAAVVIGGSFLIEGASLLVAI. Over 242–267 the chain is Cytoplasmic; sequence QSVKKGAAQEGMTIRDYIWRGHDPTS. Residues 268–288 traverse the membrane as a helical segment; the sequence is VAVMTEDGAAVAGLAIAAASL. Residues 289-297 are Vacuolar-facing; sequence VAVRMTGNP. The helical transmembrane segment at 298-318 threads the bilayer; it reads IYDPIGSIVVGNLLGMVAIFL. Residues 319 to 457 lie on the Cytoplasmic side of the membrane; the sequence is IQRNRHALIG…HNPTPTDPSL (139 aa).

It belongs to the cation diffusion facilitator (CDF) transporter (TC 2.A.4) family.

Its subcellular location is the vacuole membrane. Its function is as follows. Involved in sequestration of excess metal in the cytoplasm into vacuoles to maintain metal homeostasis. The sequence is that of Metal tolerance protein C4 (MTPC4) from Arabidopsis thaliana (Mouse-ear cress).